The chain runs to 78 residues: Large ribosomal subunit protein bL28 (78 aa).

The segment at 1–25 is disordered; that stretch reads MSRVCQVTGKRPAVGNNRSHAKNAT.

It belongs to the bacterial ribosomal protein bL28 family.

The sequence is that of Large ribosomal subunit protein bL28 from Aliivibrio fischeri (strain ATCC 700601 / ES114) (Vibrio fischeri).